A 162-amino-acid polypeptide reads, in one-letter code: Caveolin-2 (162 aa).

Residues 1–86 are Cytoplasmic-facing; that stretch reads MGLETEKADV…FEISKYVVYK (86 aa). Y19 is modified (phosphotyrosine; by SRC). A phosphoserine mark is found at S20 and S23. The residue at position 27 (Y27) is a Phosphotyrosine; by SRC. S36 is modified (phosphoserine). An intramembrane region (helical) is located at residues 87–107; that stretch reads FLTVFLAIPLAFAAGILFATL. Topologically, residues 108 to 162 are cytoplasmic; it reads SCLHIWIIMPFVKTCLMVLPSVQTVWKTVTDVVIAPLCASVGRSFSSVSLQLSHD.

Belongs to the caveolin family. Monomer or homodimer. Interacts with CAV1; the interaction forms a stable heterooligomeric complex that is required for targeting to lipid rafts and for caveolae formation. Tyrosine phosphorylated forms do not form heterooligomers with the Tyr-19-phosphorylated form existing as a monomer or dimer, and the Tyr-27-form as a monomer only. Interacts (tyrosine phosphorylated form) with the SH2 domain-containing proteins, RASA1, NCK1 and SRC. Interacts (tyrosine phosphorylated form) with INSR, the interaction (Tyr-27-phosphorylated form) is increased on insulin stimulation. Interacts (Tyr-19 phosphorylated form) with MAPK1 (phosphorylated form); the interaction, promoted by insulin, leads to nuclear location and MAPK1 activation. Interacts with STAT3; the interaction is increased on insulin-induced tyrosine phosphorylation leading to STAT activation. In terms of processing, phosphorylated on serine and tyrosine residues. CAV1 promotes phosphorylation on Ser-23 which then targets the complex to the plasma membrane, lipid rafts and caveolae. Phosphorylation on Ser-36 appears to modulate mitosis in endothelial cells. Phosphorylation on both Tyr-19 and Tyr-27 is required for insulin-induced 'Ser-727' phosphorylation of STAT3 and its activation. Phosphorylation on Tyr-19 is required for insulin-induced phosphorylation of MAPK1 and DNA binding of STAT3. Tyrosine phosphorylation is induced by both EGF and insulin (By. similarity).

Its subcellular location is the nucleus. It is found in the cytoplasm. It localises to the golgi apparatus membrane. The protein localises to the cell membrane. The protein resides in the membrane. Its subcellular location is the caveola. Its function is as follows. May act as a scaffolding protein within caveolar membranes. Interacts directly with G-protein alpha subunits and can functionally regulate their activity. Acts as an accessory protein in conjunction with CAV1 in targeting to lipid rafts and driving caveolae formation. The Ser-36 phosphorylated form has a role in modulating mitosis in endothelial cells. Positive regulator of cellular mitogenesis of the MAPK signaling pathway. Required for the insulin-stimulated nuclear translocation and activation of MAPK1 and STAT3, and the subsequent regulation of cell cycle progression. The chain is Caveolin-2 (CAV2) from Loxodonta africana (African elephant).